Consider the following 352-residue polypeptide: Putative squamosa promoter-binding-like protein 19 (352 aa).

The disordered stretch occupies residues 68–88 (AAAPATRRARGGSGGGGGGGG). The segment covering 78–88 (GGSGGGGGGGG) has biased composition (gly residues). The segment at 90–167 (AEACSVDGCR…DGHNRRRRKP (78 aa)) adopts an SBP-type zinc-finger fold. Cysteine 93, cysteine 98, cysteine 115, histidine 118, cysteine 134, cysteine 137, histidine 141, and cysteine 153 together coordinate Zn(2+). The Bipartite nuclear localization signal signature appears at 150–166 (KKSCRKRLDGHNRRRRK). Positions 152–174 (SCRKRLDGHNRRRRKPQHDALNP) are disordered.

It is found in the nucleus. In terms of biological role, trans-acting factor that binds specifically to the consensus nucleotide sequence 5'-TNCGTACAA-3'. The protein is Putative squamosa promoter-binding-like protein 19 (SPL19) of Oryza sativa subsp. japonica (Rice).